The following is a 596-amino-acid chain: Elongation factor 4 (596 aa).

Positions 2 to 184 (KHIRNFSIIA…VIVAKIPPPE (183 aa)) constitute a tr-type G domain. GTP contacts are provided by residues 14–19 (DHGKST) and 131–134 (NKID).

Belongs to the TRAFAC class translation factor GTPase superfamily. Classic translation factor GTPase family. LepA subfamily.

Its subcellular location is the cell inner membrane. It carries out the reaction GTP + H2O = GDP + phosphate + H(+). Its function is as follows. Required for accurate and efficient protein synthesis under certain stress conditions. May act as a fidelity factor of the translation reaction, by catalyzing a one-codon backward translocation of tRNAs on improperly translocated ribosomes. Back-translocation proceeds from a post-translocation (POST) complex to a pre-translocation (PRE) complex, thus giving elongation factor G a second chance to translocate the tRNAs correctly. Binds to ribosomes in a GTP-dependent manner. This Shewanella putrefaciens (strain CN-32 / ATCC BAA-453) protein is Elongation factor 4.